Here is a 596-residue protein sequence, read N- to C-terminus: Cytochrome P450 monooxygenase FUM15 (596 aa).

The segment at 476-512 (DRWLSPKNGNREATEQSKFKIGNQKRDSTAAPEVTQE) is disordered. The span at 484 to 503 (GNREATEQSKFKIGNQKRDS) shows a compositional bias: basic and acidic residues. Cys-536 lines the heme pocket.

It belongs to the cytochrome P450 family. It depends on heme as a cofactor.

Its subcellular location is the endoplasmic reticulum. Its pathway is secondary metabolite biosynthesis. In terms of biological role, cytochrome P450 monooxygenase; part of the gene cluster that mediates the biosynthesis of fumonisins B1 (FB1), B2 (FB2), B3 (FB3), and B4 (FB4), which are carcinogenic mycotoxins. Within the pathway, FUM15 may be responsible for the hydroxylations at positions C-14 and/or C-15. Also plays a role in self-protection from FB1 toxicity, probably through derivatization of FB1, and may contribute to ceramide biosynthesis. The biosynthesis starts with the FUM1-catalyzed carbon chain assembly from one molecule of acetyl-CoA, eight molecules of malonyl-CoA, and two molecules of methionine (in S-adenosyl form). The C18 polyketide chain is released from the enzyme by a nucleophilic attack of a carbanion, which is derived from R-carbon of alanine by decarboxylation, on the carbonyl carbon of polyketide acyl chain. This step is catalyzed by the pyridoxal 5'-phosphate-dependent aminoacyl transferase FUM8. The resultant 3-keto intermediate is then stereospecifically reduced to a 3-hydroxyl product by reductase FUM13. Subsequent oxidations at C-10 by the cytochrome P450 monooxygenase FUM2, C-14 and C-15 by FUM6, FUM12 or FUM15, tricarballylic esterification of the hydroxyl groups on C-14 and C-15 by acyltransferase FUM14, and C-5 hydroxylation by 2-keto-glutarate-dependent dioxygenase FUM3 furnish the biosynthesis of fumonisins. The tricarballylic moieties are most likely derived from the citric acid cycle, and their addition to the carbon backbone may involve FUM7, FUM10, FUM11 and FUM14. In Gibberella moniliformis (strain M3125 / FGSC 7600) (Maize ear and stalk rot fungus), this protein is Cytochrome P450 monooxygenase FUM15.